The sequence spans 612 residues: DNA mismatch repair protein MutL (612 aa).

The protein belongs to the DNA mismatch repair MutL/HexB family.

In terms of biological role, this protein is involved in the repair of mismatches in DNA. It is required for dam-dependent methyl-directed DNA mismatch repair. May act as a 'molecular matchmaker', a protein that promotes the formation of a stable complex between two or more DNA-binding proteins in an ATP-dependent manner without itself being part of a final effector complex. The protein is DNA mismatch repair protein MutL of Bartonella quintana (strain Toulouse) (Rochalimaea quintana).